The following is a 425-amino-acid chain: Serine hydroxymethyltransferase (425 aa).

(6S)-5,6,7,8-tetrahydrofolate is bound by residues leucine 125 and glycine 129–leucine 131. Lysine 234 carries the post-translational modification N6-(pyridoxal phosphate)lysine.

The protein belongs to the SHMT family. In terms of assembly, homodimer. Pyridoxal 5'-phosphate is required as a cofactor.

The protein localises to the cytoplasm. It catalyses the reaction (6R)-5,10-methylene-5,6,7,8-tetrahydrofolate + glycine + H2O = (6S)-5,6,7,8-tetrahydrofolate + L-serine. It participates in one-carbon metabolism; tetrahydrofolate interconversion. The protein operates within amino-acid biosynthesis; glycine biosynthesis; glycine from L-serine: step 1/1. Its function is as follows. Catalyzes the reversible interconversion of serine and glycine with tetrahydrofolate (THF) serving as the one-carbon carrier. This reaction serves as the major source of one-carbon groups required for the biosynthesis of purines, thymidylate, methionine, and other important biomolecules. Also exhibits THF-independent aldolase activity toward beta-hydroxyamino acids, producing glycine and aldehydes, via a retro-aldol mechanism. This is Serine hydroxymethyltransferase from Marinomonas sp. (strain MWYL1).